Reading from the N-terminus, the 241-residue chain is MRKIAIAGNWKMHKTQAEALEFLQTFLPLLQDTPEDRDVILCAPFTTLTALSKNLHGSRVQVGAQNIHWEDTGAFTGEISGPMLLETGVRYVVVGHSERRQFFGETDATVNQRLKAAQNHRLTPILCVGESKAQRDANETETVIFEQLEKGLVGVDQKNLIIAYEPIWAIGTGDTCASSEANRVIGLIRSRLTNHDVTIQYGGSVKPDNVDEIMAQPEIDGALVGGASLAGDGFARVVNYQ.

Residue asparagine 9 to lysine 11 participates in substrate binding. Histidine 96 (electrophile) is an active-site residue. Glutamate 165 functions as the Proton acceptor in the catalytic mechanism. Residues glycine 171, serine 204, and glycine 225 to glycine 226 contribute to the substrate site.

It belongs to the triosephosphate isomerase family. As to quaternary structure, homodimer.

The protein localises to the cytoplasm. It carries out the reaction D-glyceraldehyde 3-phosphate = dihydroxyacetone phosphate. It functions in the pathway carbohydrate biosynthesis; gluconeogenesis. It participates in carbohydrate degradation; glycolysis; D-glyceraldehyde 3-phosphate from glycerone phosphate: step 1/1. Involved in the gluconeogenesis. Catalyzes stereospecifically the conversion of dihydroxyacetone phosphate (DHAP) to D-glyceraldehyde-3-phosphate (G3P). The polypeptide is Triosephosphate isomerase (Acaryochloris marina (strain MBIC 11017)).